Reading from the N-terminus, the 193-residue chain is Ion-translocating oxidoreductase complex subunit B (193 aa).

The tract at residues 1-26 is hydrophobic; it reads MSTMLIAVILLTLLALFFGVLLGFAA. Residues 32 to 90 form the 4Fe-4S domain; sequence EGNPIVDELEAILPQTQCGQCGYPGCRPYAEAIANGDKVNKCPPGGTATMEKLASLMGV. [4Fe-4S] cluster-binding residues include Cys-49, Cys-52, Cys-57, Cys-73, Cys-114, Cys-117, Cys-120, Cys-124, Cys-144, Cys-147, Cys-150, and Cys-154. 2 consecutive 4Fe-4S ferredoxin-type domains span residues 105–134 and 136–164; these read KVAY…GAGK and MHTV…MVPV.

Belongs to the 4Fe4S bacterial-type ferredoxin family. RnfB subfamily. In terms of assembly, the complex is composed of six subunits: RnfA, RnfB, RnfC, RnfD, RnfE and RnfG. Requires [4Fe-4S] cluster as cofactor.

Its subcellular location is the cell inner membrane. Functionally, part of a membrane-bound complex that couples electron transfer with translocation of ions across the membrane. This chain is Ion-translocating oxidoreductase complex subunit B, found in Shewanella oneidensis (strain ATCC 700550 / JCM 31522 / CIP 106686 / LMG 19005 / NCIMB 14063 / MR-1).